A 1215-amino-acid chain; its full sequence is MKQPIMADGPRCKRRKQANPRRKNVVNYDNVVDAGSETDEEDKLHIAEDDSLANPLDQDTSPASMPNHESSPHMSQGLLPREEEEEELRESVVEHSWHSGEILQASVAGPEEMKEDYDAMGPEATIQTTINNGTVKNANCTSDFEEYFAKRKLEERDGHAVSIEEYLQRSDTAIIYPEAPEELSRLGTPEANGQEENDLPPGTPDAFAQLLTCPYCDRGYKRLTSLKEHIKYRHEKNEENFSCPLCSYTFAYRTQLERHMVTHKPGTDQHQMLTQGAGNRKFKCTECGKAFKYKHHLKEHLRIHSGEKPYECPNCKKRFSHSGSYSSHISSKKCIGLISVNGRMRNNIKTGSSPNSVSSSPTNSAITQLRNKLENGKPLSMSEQTGLLKIKTEPLDFNDYKVLMATHGFSGSSPFMNGGLGATSPLGVHPSAQSPMQHLGVGMEAPLLGFPTMNSNLSEVQKVLQIVDNTVSRQKMDCKTEDISKLKGYHMKDPCSQPEEQGVTSPNIPPVGLPVVSHNGATKSIIDYTLEKVNEAKACLQSLTTDSRRQISNIKKEKLRTLIDLVTDDKMIENHSISTPFSCQFCKESFPGPIPLHQHERYLCKMNEEIKAVLQPHENIVPNKAGVFVDNKALLLSSVLSEKGLTSPINPYKDHMSVLKAYYAMNMEPNSDELLKISIAVGLPQEFVKEWFEQRKVYQYSNSRSPSLERTSKPLAPNSNPTTKDSLLPRSPVKPMDSITSPSIAELHNSVTSCDPPLRLTKSSHFTNIKAVDKLDHSRSNTPSPLNLSSTSSKNSHSSSYTPNSFSSEELQAEPLDLSLPKQMREPKGIIATKNKTKATSINLDHNSVSSSSENSDEPLNLTFIKKEFSNSNNLDNKSNNPVFGMNPFSAKPLYTPLPPQSAFPPATFMPPVQTSIPGLRPYPGLDQMSFLPHMAYTYPTGAATFADMQQRRKYQRKQGFQGDLLDGAQDYMSGLDDMTDSDSCLSRKKIKKTESGMYACDLCDKTFQKSSSLLRHKYEHTGKRPHQCQICKKAFKHKHHLIEHSRLHSGEKPYQCDKCGKRFSHSGSYSQHMNHRYSYCKREAEEREAAEREAREKGHLEPTELLMNRAYLQSITPQGYSDSEERESMPRDGESEKEHEKEGEEGYGKLRRRDGDEEEEEEEEESENKSMDTDPETIRDEEETGDHSMDDSSEDGKMETKSDHEEDNMEDGME.

The interval 1 to 111 (MKQPIMADGP…ILQASVAGPE (111 aa)) is disordered. The span at 12-24 (CKRRKQANPRRKN) shows a compositional bias: basic residues. Polar residues predominate over residues 57–74 (DQDTSPASMPNHESSPHM). Residues 89-98 (RESVVEHSWH) show a composition bias toward basic and acidic residues. Ser-142 is subject to Phosphoserine. 3 consecutive C2H2-type zinc fingers follow at residues 211–234 (LTCP…KYRH), 241–263 (FSCP…MVTH), and 282–304 (FKCT…LRIH). A C2H2-type 4; atypical zinc finger spans residues 310-334 (YECPNCKKRFSHSGSYSSHISSKKC). Phosphoserine is present on residues Ser-356, Ser-360, and Ser-364. Lys-377 is modified (N6-acetyllysine). Lys-391 is covalently cross-linked (Glycyl lysine isopeptide (Lys-Gly) (interchain with G-Cter in SUMO); alternate). Lys-391 participates in a covalent cross-link: Glycyl lysine isopeptide (Lys-Gly) (interchain with G-Cter in SUMO2); alternate. Residues 437–487 (QHLGVGMEAPLLGFPTMNSNLSEVQKVLQIVDNTVSRQKMDCKTEDISKLK) are SMAD-MH2 binding domain. Residues Lys-479 and Lys-555 each participate in a glycyl lysine isopeptide (Lys-Gly) (interchain with G-Cter in SUMO2) cross-link. A C2H2-type 5; degenerate zinc finger spans residues 581-605 (FSCQFCKESFPGPIPLHQHERYLCK). Residues Lys-611 and Lys-632 each participate in a glycyl lysine isopeptide (Lys-Gly) (interchain with G-Cter in SUMO2) cross-link. The homeobox; atypical DNA-binding region spans 644-703 (GLTSPINPYKDHMSVLKAYYAMNMEPNSDELLKISIAVGLPQEFVKEWFEQRKVYQYSNS). Position 647 is a phosphoserine (Ser-647). Disordered stretches follow at residues 702-740 (NSRS…DSIT) and 772-811 (VDKL…SEEL). A Glycyl lysine isopeptide (Lys-Gly) (interchain with G-Cter in SUMO2) cross-link involves residue Lys-713. 2 positions are modified to phosphoserine: Ser-731 and Ser-780. Low complexity predominate over residues 780–808 (SNTPSPLNLSSTSSKNSHSSSYTPNSFSS). The residue at position 782 (Thr-782) is a Phosphothreonine. The residue at position 784 (Ser-784) is a Phosphoserine. Residue Lys-866 forms a Glycyl lysine isopeptide (Lys-Gly) (interchain with G-Cter in SUMO); alternate linkage. Lys-866 is covalently cross-linked (Glycyl lysine isopeptide (Lys-Gly) (interchain with G-Cter in SUMO2); alternate). C2H2-type zinc fingers lie at residues 999-1021 (YACD…KYEH) and 1027-1049 (HQCQ…SRLH). The C2H2-type 8; atypical zinc finger occupies 1055-1076 (YQCDKCGKRFSHSGSYSQHMNH). The segment at 1117–1215 (TPQGYSDSEE…EEDNMEDGME (99 aa)) is disordered. A phosphoserine mark is found at Ser-1122 and Ser-1124. The segment covering 1127-1149 (RESMPRDGESEKEHEKEGEEGYG) has biased composition (basic and acidic residues). The segment covering 1157-1167 (DEEEEEEEEES) has biased composition (acidic residues). 2 stretches are compositionally biased toward basic and acidic residues: residues 1168–1179 (ENKSMDTDPETI) and 1186–1205 (GDHS…KSDH). Ser-1203 carries the post-translational modification Phosphoserine. Acidic residues predominate over residues 1206-1215 (EEDNMEDGME).

This sequence belongs to the delta-EF1/ZFH-1 C2H2-type zinc-finger family. As to quaternary structure, interacts with CBX4 and CTBP1. Binds activated SMAD1, activated SMAD2 and activated SMAD3; binding with SMAD4 is not detected. Post-translationally, sumoylation on Lys-391 and Lys-866 is promoted by the E3 SUMO-protein ligase CBX4, and impairs interaction with CTBP1 and transcription repression activity.

It is found in the nucleus. The protein localises to the chromosome. Transcriptional inhibitor that binds to DNA sequence 5'-CACCT-3' in different promoters. Represses transcription of E-cadherin. Represses expression of MEOX2. The chain is Zinc finger E-box-binding homeobox 2 (Zeb2) from Mus musculus (Mouse).